Consider the following 279-residue polypeptide: Putative methyltransferase Jann_4284 (279 aa).

This Jannaschia sp. (strain CCS1) protein is Putative methyltransferase Jann_4284.